The sequence spans 531 residues: Ribosomal protein uS12 methylthiotransferase RimO (531 aa).

2 stretches are compositionally biased toward polar residues: residues 1–19 (MPNI…SQPA) and 55–67 (HNQN…SSEV). The tract at residues 1-77 (MPNISTESVN…VSAASAKTTT (77 aa)) is disordered. Low complexity predominate over residues 68 to 77 (VSAASAKTTT). An MTTase N-terminal domain is found at 88 to 198 (PKIGFVSLGC…VIRAVALHVP (111 aa)). [4Fe-4S] cluster is bound by residues cysteine 97, cysteine 133, cysteine 162, cysteine 236, cysteine 240, and cysteine 243. A Radical SAM core domain is found at 222–459 (LTPSHYAYLK…MTLQQDISAQ (238 aa)). The TRAM domain maps to 462-531 (QEKIGKTLMV…EYDLFASYKG (70 aa)).

This sequence belongs to the methylthiotransferase family. RimO subfamily. Requires [4Fe-4S] cluster as cofactor.

The protein localises to the cytoplasm. The catalysed reaction is L-aspartate(89)-[ribosomal protein uS12]-hydrogen + (sulfur carrier)-SH + AH2 + 2 S-adenosyl-L-methionine = 3-methylsulfanyl-L-aspartate(89)-[ribosomal protein uS12]-hydrogen + (sulfur carrier)-H + 5'-deoxyadenosine + L-methionine + A + S-adenosyl-L-homocysteine + 2 H(+). Its function is as follows. Catalyzes the methylthiolation of an aspartic acid residue of ribosomal protein uS12. The polypeptide is Ribosomal protein uS12 methylthiotransferase RimO (Psychrobacter cryohalolentis (strain ATCC BAA-1226 / DSM 17306 / VKM B-2378 / K5)).